The following is a 1370-amino-acid chain: DNA-directed RNA polymerase subunit beta (1370 aa).

The protein belongs to the RNA polymerase beta chain family. In terms of assembly, the RNAP catalytic core consists of 2 alpha, 1 beta, 1 beta' and 1 omega subunit. When a sigma factor is associated with the core the holoenzyme is formed, which can initiate transcription.

The enzyme catalyses RNA(n) + a ribonucleoside 5'-triphosphate = RNA(n+1) + diphosphate. Its function is as follows. DNA-dependent RNA polymerase catalyzes the transcription of DNA into RNA using the four ribonucleoside triphosphates as substrates. This chain is DNA-directed RNA polymerase subunit beta, found in Polaromonas naphthalenivorans (strain CJ2).